Consider the following 171-residue polypeptide: Tetratricopeptide repeat protein 9C (171 aa).

3 TPR repeats span residues 8 to 41 (AQLY…LRGL), 72 to 107 (TDCY…QPEN), and 108 to 141 (AKAL…QPKD).

Belongs to the TTC9 family.

This is Tetratricopeptide repeat protein 9C (Ttc9c) from Rattus norvegicus (Rat).